Consider the following 189-residue polypeptide: DAN domain family member 5 (189 aa).

The first 22 residues, 1–22 (MLLGQLSTLLCLLSGALPTGSG), serve as a signal peptide directing secretion. N-linked (GlcNAc...) asparagine glycosylation occurs at Asn38. Intrachain disulfides connect Cys101-Cys148, Cys115-Cys162, Cys125-Cys183, and Cys129-Cys185. A CTCK domain is found at 101–186 (CKAVPFVQVF…TMLIEGCHCS (86 aa)).

The protein belongs to the DAN family. Expressed in the retina, in inner segments of photoreceptors, at or close to the outer plexiform layer and in the ganglion cell layer (at protein level).

It is found in the secreted. Its function is as follows. Antagonist of the extracellular signaling protein NODAL, which is required for correct left-right patterning during embryonic development. Antagonist of BMP and TGF-beta signaling. Independently of its role in left-right axis establishment, plays a role during heart development, possibly through the regulation of TGF-beta/Nodal signaling pathway. Displays anti-angiogenic activity by inhibiting endothelial sprouting, migration, and proliferation. Once internalized by endothelial cells, may alter their redox and glycolytic balance. The sequence is that of DAN domain family member 5 (DAND5) from Homo sapiens (Human).